Reading from the N-terminus, the 868-residue chain is Leucine--tRNA ligase (868 aa).

Residues 42–52 (PYPSGKLHMGH) carry the 'HIGH' region motif. The short motif at 627-631 (KMAKS) is the 'KMSKS' region element. ATP is bound at residue K630.

It belongs to the class-I aminoacyl-tRNA synthetase family.

The protein resides in the cytoplasm. The catalysed reaction is tRNA(Leu) + L-leucine + ATP = L-leucyl-tRNA(Leu) + AMP + diphosphate. The sequence is that of Leucine--tRNA ligase from Pseudomonas fluorescens (strain ATCC BAA-477 / NRRL B-23932 / Pf-5).